The following is a 216-amino-acid chain: Probable GTP-binding protein EngB (216 aa).

Residues 26 to 200 enclose the EngB-type G domain; it reads EGIEIAFAGR…RAKLDTWFAP (175 aa). GTP-binding positions include 34–41, 61–65, 79–82, 146–149, and 179–181; these read GRSNAGKS, GRTQL, DLPG, TKAD, and YSS. The Mg(2+) site is built by serine 41 and threonine 63.

This sequence belongs to the TRAFAC class TrmE-Era-EngA-EngB-Septin-like GTPase superfamily. EngB GTPase family. It depends on Mg(2+) as a cofactor.

In terms of biological role, necessary for normal cell division and for the maintenance of normal septation. This chain is Probable GTP-binding protein EngB, found in Vibrio vulnificus (strain YJ016).